A 178-amino-acid polypeptide reads, in one-letter code: Caveolin-1 (178 aa).

Ser2 is subject to N-acetylserine. Ser2 bears the Phosphoserine mark. Residues 2–94 (SGGKYVDSEG…WKASFTTFTV (93 aa)) are required for homooligomerization. Residues 2-104 (SGGKYVDSEG…TKYWFYRLLS (103 aa)) are Cytoplasmic-facing. Lys5 bears the N6-acetyllysine; alternate mark. Lys5 participates in a covalent cross-link: Glycyl lysine isopeptide (Lys-Gly) (interchain with G-Cter in ubiquitin); alternate. Tyr6 carries the phosphotyrosine modification. Ser9 is subject to Phosphoserine. Tyr14 is subject to Phosphotyrosine; by ABL1. Tyr25 is modified (phosphotyrosine). Residues Lys26 and Lys30 each participate in a glycyl lysine isopeptide (Lys-Gly) (interchain with G-Cter in ubiquitin) cross-link. Ser37 carries the post-translational modification Phosphoserine. Glycyl lysine isopeptide (Lys-Gly) (interchain with G-Cter in ubiquitin) cross-links involve residues Lys39, Lys47, and Lys57. Residues 82–94 (DGIWKASFTTFTV) are interaction with CAVIN3. An intramembrane region (helical) is located at residues 105-125 (ALFGIPMALIWGIYFAILSFL). Over 126–178 (HIWAVVPCIKSFLIEIQCISRVYSIYIHTVCDPLFEAIGKIFSNVRIGLQKEI) the chain is Cytoplasmic. The interval 131 to 142 (VPCIKSFLIEIQ) is interacts with SPRY1, SPRY2, SPRY3 and SPRY4. S-palmitoyl cysteine attachment occurs at residues Cys133, Cys143, and Cys156. The tract at residues 149–160 (SIYIHTVCDPLF) is interacts with SPRY1, SPRY2, and SPRY4. Residues 167–178 (FSNVRIGLQKEI) are interacts with SPRY1, SPRY2, SPRY3 and SPRY4.

This sequence belongs to the caveolin family. Homooligomer. Interacts with GLIPR2. Interacts with NOSTRIN. Interacts with SNAP25 and STX1A. Interacts (via the N-terminus) with DPP4; the interaction is direct. Interacts with CTNNB1, CDH1 and JUP. Interacts with PACSIN2; this interaction induces membrane tubulation. Interacts with SLC7A9. Interacts with BMX and BTK. Interacts with TGFBR1. Interacts with CAVIN3 (via leucine-zipper domain) in a cholesterol-sensitive manner. Interacts with CAVIN1. Interacts with EHD2 in a cholesterol-dependent manner. Forms a ternary complex with UBXN6 and VCP; mediates CAV1 targeting to lysosomes for degradation. Interacts with ABCG1; this interaction regulates ABCG1-mediated cholesterol efflux. Interacts with NEU3; this interaction enhances NEU3 sialidase activity within caveola. Interacts (via C-terminus) with SPRY1, SPRY2 (via C-terminus), SPRY3, and SPRY4. Interacts with IGFBP5; this interaction allows trafficking of IGFBP5 from the plasma membrane to the nucleus. Phosphorylated at Tyr-14 by ABL1 in response to oxidative stress. Post-translationally, ubiquitinated. Undergo monoubiquitination and multi- and/or polyubiquitination. Monoubiquitination of N-terminal lysines promotes integration in a ternary complex with UBXN6 and VCP which promotes oligomeric CAV1 targeting to lysosomes for degradation. Ubiquitinated by ZNRF1; leading to degradation and modulation of the TLR4-mediated immune response.

Its subcellular location is the golgi apparatus membrane. It localises to the cell membrane. It is found in the membrane. The protein localises to the caveola. The protein resides in the membrane raft. Its function is as follows. May act as a scaffolding protein within caveolar membranes. Forms a stable heterooligomeric complex with CAV2 that targets to lipid rafts and drives caveolae formation. Mediates the recruitment of CAVIN proteins (CAVIN1/2/3/4) to the caveolae. Interacts directly with G-protein alpha subunits and can functionally regulate their activity. Involved in the costimulatory signal essential for T-cell receptor (TCR)-mediated T-cell activation. Its binding to DPP4 induces T-cell proliferation and NF-kappa-B activation in a T-cell receptor/CD3-dependent manner. Recruits CTNNB1 to caveolar membranes and may regulate CTNNB1-mediated signaling through the Wnt pathway. Negatively regulates TGFB1-mediated activation of SMAD2/3 by mediating the internalization of TGFBR1 from membrane rafts leading to its subsequent degradation. Binds 20(S)-hydroxycholesterol (20(S)-OHC). This chain is Caveolin-1 (CAV1), found in Saimiri boliviensis boliviensis (Bolivian squirrel monkey).